The chain runs to 255 residues: MSDSIHRRKVSNPVGNGGRSSRTRRTAFRYVSDKNNRSKSSNKVFERSFSEPSLNRHRDGQSNHLRRPSPMRGLPMEEETKPIVYLPRIRSEVFASSPSLLNLYSPSSSSPINQEGNTKEAPKVIISVAVEGSPGPVRAMVKLSCNVEETIKIVVDKYCKEGRTPKLDRDSAFELHQSHFSIQCLEKREIIGELGSRSFYMRKKAPETGGSFAGISPARTSLIPSSNLIGSCIAQLIGKIMRRTRRIWNILVCVQ.

The segment covering 1-10 (MSDSIHRRKV) has biased composition (basic residues). Residues 1 to 78 (MSDSIHRRKV…SPMRGLPMEE (78 aa)) are disordered. The span at 44–61 (VFERSFSEPSLNRHRDGQ) shows a compositional bias: basic and acidic residues.

This is an uncharacterized protein from Arabidopsis thaliana (Mouse-ear cress).